Reading from the N-terminus, the 50-residue chain is Sperm protamine P1 (50 aa).

It belongs to the protamine P1 family. Cross-linked by interchain disulfide bonds around the DNA-helix. In terms of tissue distribution, testis.

The protein resides in the nucleus. It is found in the chromosome. Functionally, protamines substitute for histones in the chromatin of sperm during the haploid phase of spermatogenesis. They compact sperm DNA into a highly condensed, stable and inactive complex. The chain is Sperm protamine P1 (PRM1) from Pan paniscus (Pygmy chimpanzee).